The sequence spans 352 residues: Ribosome biogenesis protein BRX1 homolog (352 aa).

The tract at residues 1–55 (MGKFSKIKKVQEEESAHQKMEWEAAGAKDSSSDDSSDESDNDDQPKQATEETRKR) is disordered. The span at 9–22 (KVQEEESAHQKMEW) shows a compositional bias: basic and acidic residues. Over residues 32–42 (SDDSSDESDND) the composition is skewed to acidic residues. A compositionally biased stretch (basic and acidic residues) spans 43-55 (DQPKQATEETRKR). In terms of domain architecture, Brix spans 63-253 (ERVLVLCSRG…MVRLFAGSFE (191 aa)).

It belongs to the BRX1 family.

The protein resides in the nucleus. The protein localises to the nucleolus. Its function is as follows. Required for biogenesis of the 60S ribosomal subunit. The protein is Ribosome biogenesis protein BRX1 homolog of Caenorhabditis elegans.